Here is a 374-residue protein sequence, read N- to C-terminus: 2-oxoglutarate-Fe(II) type oxidoreductase ppzC (374 aa).

Positions 111-130 are disordered; it reads KDGPFDSGYRGPGTQRVNPT. The 111-residue stretch at 220 to 330 folds into the Fe2OG dioxygenase domain; that stretch reads YPDASLEINF…RVSMPFFWGF (111 aa). Fe cation is bound by residues His254, Asp256, and His311. Arg321 provides a ligand contact to 2-oxoglutarate.

The protein belongs to the iron/ascorbate-dependent oxidoreductase family. Fe(2+) is required as a cofactor.

The enzyme catalyses peramine + 2-oxoglutarate + O2 = 8-hydroxyperamine + succinate + CO2. It participates in secondary metabolite biosynthesis. 2-oxoglutarate-Fe(II) type oxidoreductase; part of the gene cluster that mediates the biosynthesis of pyrrolopyrazines, secondary metabolites showing insecticidal activity. Within the pathway, ppzC uses peramine as substrate for hydroxylation to yield the novel analog 8-hydroxyperamine. The single multifunctional NRPS ppzA is sufficient to produce peramine via condensation of 1-pyrroline-5-carboxylate and arginine, N-methylation of the alpha-amino group of arginine and reduction of the thioester and the cyclization to form an iminium ion resulting in release from the peptide synthetase. Deprotonation of this intermediate and oxidation of the pyrroline ring would give rise to peramine. In Epichloe species that produce only peramine, the peramine synthetase gene is not localized in a gene cluster, in contrast to Metarhizium species that contain additional pyrrolopyrazine biosynthesis genes. The 2-oxoglutarate-Fe(II) type oxidoreductase ppzC hydroxylates peramine to yield the newly identified compound 8-hydroxyperamine whereas ppzD converts L-proline into trans-4-hydroxy-L-proline, a precursor of peramine biosynthesis. The sequence is that of 2-oxoglutarate-Fe(II) type oxidoreductase ppzC from Metarhizium rileyi (strain RCEF 4871) (Nomuraea rileyi).